The sequence spans 388 residues: P2X purinoceptor 4 (388 aa).

Topologically, residues M1 to R33 are cytoplasmic. A helical membrane pass occupies residues A34 to Y54. The Extracellular portion of the chain corresponds to Q55–N338. Positions 67 and 69 each coordinate ATP. The CTP site is built by K67 and K69. Residues N75 and N110 are each glycosylated (N-linked (GlcNAc...) asparagine). Cystine bridges form between C116–C165, C126–C149, and C132–C159. N-linked (GlcNAc...) asparagine glycosylation is found at N153 and N184. ATP is bound by residues T186 and L188. Residue T186 participates in CTP binding. 2 N-linked (GlcNAc...) asparagine glycosylation sites follow: N199 and N208. 2 disulfide bridges follow: C217-C227 and C261-C270. 3 residues coordinate ATP: N293, R295, and K313. Residues N293, R295, and K313 each contribute to the CTP site. The chain crosses the membrane as a helical span at residues I339–Y359. Residues C360 to Q388 lie on the Cytoplasmic side of the membrane.

This sequence belongs to the P2X receptor family. Functional P2RXs are organized as homomeric and heteromeric trimers. Forms heterotrimer with P2RX1. Interacts with P2RX7 (via C-terminus); this interaction is functional only in the presence of ATP. Forms heterotrimer with P2RX4; functional differences between homomeric P2RX4 and P2RX4/6 heterotrimer are minor. Interacts with AP1M2.

Its subcellular location is the cell membrane. The protein localises to the lysosome membrane. The catalysed reaction is K(+)(in) = K(+)(out). The enzyme catalyses Na(+)(in) = Na(+)(out). It carries out the reaction Ca(2+)(in) = Ca(2+)(out). Activated by ATP. pH-dependent and inhibited by acidic pH. Functionally, ATP-gated nonselective transmembrane cation channel permeable to potassium, sodium and calcium. CTP, but not GTP or UTP, functions as a weak affinity agonist for P2RX4. Activated by extracellularly released ATP, it plays multiple role in immunity and central nervous system physiology. Plays a key role in initial steps of T-cell activation and Ca(2+) microdomain formation. Also participates in basal T-cell activity without TCR/CD3 stimulation. Promotes the differentiation and activation of Th17 cells via expression of retinoic acid-related orphan receptor C/RORC. Upon activation, drives microglia motility via the PI3K/Akt pathway. Could also function as an ATP-gated cation channel of lysosomal membranes. The sequence is that of P2X purinoceptor 4 (P2RX4) from Homo sapiens (Human).